A 993-amino-acid polypeptide reads, in one-letter code: Desmoglein-3 (993 aa).

A signal peptide spans 1–23 (MTCLFPRALGSLALLMVVLLVQG). A propeptide spanning residues 24–49 (ELHVKPGGQHREDGTALQLAKRRYKR) is cleaved from the precursor. Cadherin domains are found at residues 50 to 157 (EWVK…PPIF), 158 to 267 (SQTI…FPVL), 268 to 388 (RESQ…PPSK), and 384 to 495 (RPPS…CPSV). Residues 50–617 (EWVKFAKPCR…YGESSWRLGP (568 aa)) lie on the Extracellular side of the membrane. 2 N-linked (GlcNAc...) asparagine glycosylation sites follow: Asn-110 and Asn-180. 2 N-linked (GlcNAc...) asparagine glycosylation sites follow: Asn-459 and Asn-546. The helical transmembrane segment at 618–638 (AAIGLILLGLLMLLLAPLLLL) threads the bilayer. Residues 639 to 993 (TCDCGSGPIG…LYTKETCSHL (355 aa)) lie on the Cytoplasmic side of the membrane. The interval 641–714 (DCGSGPIGGA…NTYAGGTMVE (74 aa)) is required for interaction with CTNND1 and localization at cell-cell junctions. The tract at residues 845–876 (AKQAKPGPKDSGSGADTCARSMEVPQSGSNRY) is disordered. Desmoglein repeat repeat units lie at residues 905-930 (MSTS…LLTE) and 931-961 (TYST…ERVI).

Homodimer. Part of a complex that contains DSG3, PKP1, YAP1 and YWHAG; the complex is required for localization of DSG3 and YAP1 to the cell membrane in keratinocytes. Interacts with PKP2. Interacts with CTNND1; the interaction facilitates DSG3 localization and retention at cell-cell junctions. Interacts with CDH1; the interaction is required for CDH1 localization to developing adherens junctions. Interacts with RAC1; the interaction is required for DSG3 translocation to cell-cell junctions, organization of cortical F-actin bundles and actin anchoring at cell-cell junctions. Interacts with DSC3; the interaction may limit the interaction of DSC3 with p38MAPK family members and therefore repress p38MAPK signaling activation. In terms of tissue distribution, expressed in the basal layer of the outer root sheath of the telogen hair club, specifically at the cell membrane between the apex of the cells and the surrounding hair club (at protein level). Expression is less abundant between the lateral margins of the outer root sheath basal cells (at protein level). Expressed in epidermis. Expressed in the epithelium of the tongue.

The protein resides in the cell membrane. It is found in the cell junction. It localises to the desmosome. The protein localises to the cytoplasm. Its subcellular location is the tight junction. A component of desmosome cell-cell junctions which are required for positive regulation of cellular adhesion. Required for adherens and desmosome junction assembly in response to mechanical force in keratinocytes. Required for desmosome-mediated cell-cell adhesion of cells surrounding the telogen hair club and the basal layer of the outer root sheath epithelium, consequently is essential for the anchoring of telogen hairs in the hair follicle. Required for the maintenance of the epithelial barrier via promoting desmosome-mediated intercellular attachment of suprabasal epithelium to basal cells. May play a role in the protein stability of the desmosome plaque components DSP, JUP, PKP1, PKP2 and PKP3. Required for YAP1 localization at the plasma membrane in keratinocytes in response to mechanical strain, via the formation of an interaction complex composed of DSG3, PKP1 and YWHAG. May also be involved in the positive regulation of YAP1 target gene transcription and as a result cell proliferation. Positively regulates cellular contractility and cell junction formation via organization of cortical F-actin bundles and anchoring of actin to tight junctions, in conjunction with RAC1. The cytoplasmic pool of DSG3 is required for the localization of CDH1 and CTNNB1 at developing adherens junctions, potentially via modulation of SRC activity. Inhibits keratinocyte migration via suppression of p38MAPK signaling, may therefore play a role in moderating wound healing. This is Desmoglein-3 (Dsg3) from Mus musculus (Mouse).